Consider the following 354-residue polypeptide: Uroporphyrinogen decarboxylase (354 aa).

Residues 27 to 31, aspartate 77, tyrosine 154, serine 209, and histidine 327 each bind substrate; that span reads RQAGR.

It belongs to the uroporphyrinogen decarboxylase family. In terms of assembly, homodimer.

The protein resides in the cytoplasm. It catalyses the reaction uroporphyrinogen III + 4 H(+) = coproporphyrinogen III + 4 CO2. It participates in porphyrin-containing compound metabolism; protoporphyrin-IX biosynthesis; coproporphyrinogen-III from 5-aminolevulinate: step 4/4. Functionally, catalyzes the decarboxylation of four acetate groups of uroporphyrinogen-III to yield coproporphyrinogen-III. The sequence is that of Uroporphyrinogen decarboxylase from Shewanella putrefaciens (strain CN-32 / ATCC BAA-453).